The primary structure comprises 398 residues: Tyrosine--tRNA ligase (398 aa).

The 'HIGH' region motif lies at 48 to 57 (PTGADIHLGH). The 'KMSKS' region motif lies at 235–239 (KMSKS). K238 is a binding site for ATP. An S4 RNA-binding domain is found at 334-398 (VKLAYLLGAT…GKNKFMRLVP (65 aa)).

The protein belongs to the class-I aminoacyl-tRNA synthetase family. TyrS type 2 subfamily. In terms of assembly, homodimer.

The protein localises to the cytoplasm. It catalyses the reaction tRNA(Tyr) + L-tyrosine + ATP = L-tyrosyl-tRNA(Tyr) + AMP + diphosphate + H(+). Catalyzes the attachment of tyrosine to tRNA(Tyr) in a two-step reaction: tyrosine is first activated by ATP to form Tyr-AMP and then transferred to the acceptor end of tRNA(Tyr). The protein is Tyrosine--tRNA ligase of Nostoc sp. (strain PCC 7120 / SAG 25.82 / UTEX 2576).